The primary structure comprises 431 residues: Histidine--tRNA ligase (431 aa).

Positions 1–20 are disordered; the sequence is MALQRPKGTQDHLPDGSPKL.

It belongs to the class-II aminoacyl-tRNA synthetase family. As to quaternary structure, homodimer.

It is found in the cytoplasm. The enzyme catalyses tRNA(His) + L-histidine + ATP = L-histidyl-tRNA(His) + AMP + diphosphate + H(+). This chain is Histidine--tRNA ligase, found in Deinococcus geothermalis (strain DSM 11300 / CIP 105573 / AG-3a).